We begin with the raw amino-acid sequence, 202 residues long: Outer-membrane lipoprotein carrier protein (202 aa).

Residues 1–18 (MNKLFLILLLIFSHEVFS) form the signal peptide.

It belongs to the LolA family. Monomer.

The protein localises to the periplasm. Its function is as follows. Participates in the translocation of lipoproteins from the inner membrane to the outer membrane. Only forms a complex with a lipoprotein if the residue after the N-terminal Cys is not an aspartate (The Asp acts as a targeting signal to indicate that the lipoprotein should stay in the inner membrane). The polypeptide is Outer-membrane lipoprotein carrier protein (Legionella pneumophila (strain Paris)).